A 220-amino-acid polypeptide reads, in one-letter code: N-(5'-phosphoribosyl)anthranilate isomerase (220 aa).

This sequence belongs to the TrpF family.

It carries out the reaction N-(5-phospho-beta-D-ribosyl)anthranilate = 1-(2-carboxyphenylamino)-1-deoxy-D-ribulose 5-phosphate. The protein operates within amino-acid biosynthesis; L-tryptophan biosynthesis; L-tryptophan from chorismate: step 3/5. The sequence is that of N-(5'-phosphoribosyl)anthranilate isomerase from Bordetella petrii (strain ATCC BAA-461 / DSM 12804 / CCUG 43448).